Reading from the N-terminus, the 172-residue chain is MAEKRNIFLVGPMGAGKSTIGRHLAQQLHMEFVDSDTVIEERTGADISWVFDVEGEEGFRKREEAVLEDLTQEQGIVLATGGGSVKSKENRNRLSARGVVVYLETTIEKQLARTNRDKKRPLLQTDNPREVLEQLAEERNPLYEEVADYTVRTDDQSAKVVANQIVKMLEER.

14–19 (GAGKST) lines the ATP pocket. Serine 18 is a binding site for Mg(2+). Substrate contacts are provided by aspartate 36, arginine 60, and glycine 82. Arginine 120 serves as a coordination point for ATP. Residue arginine 139 participates in substrate binding. Glutamine 156 contributes to the ATP binding site.

Belongs to the shikimate kinase family. In terms of assembly, monomer. Requires Mg(2+) as cofactor.

The protein localises to the cytoplasm. It catalyses the reaction shikimate + ATP = 3-phosphoshikimate + ADP + H(+). The protein operates within metabolic intermediate biosynthesis; chorismate biosynthesis; chorismate from D-erythrose 4-phosphate and phosphoenolpyruvate: step 5/7. Catalyzes the specific phosphorylation of the 3-hydroxyl group of shikimic acid using ATP as a cosubstrate. The protein is Shikimate kinase of Vibrio parahaemolyticus serotype O3:K6 (strain RIMD 2210633).